The sequence spans 486 residues: Palmitoyltransferase pfa4 (486 aa).

At 1 to 15 (MTNLQTGPTTRGLQR) the chain is on the cytoplasmic side. A helical transmembrane segment spans residues 16–36 (FAIPAVCGLIIFLGYYSQYLF). The Lumenal portion of the chain corresponds to 37 to 51 (NTSADLAPGPLTCRE). A helical membrane pass occupies residues 52-72 (SLIFNILLVCLWLTYYQACTV). Topologically, residues 73-146 (DPGQYKFPPK…NCVSLQTFPH (74 aa)) are cytoplasmic. Residues 81-91 (PKEKEDGDNNN) are compositionally biased toward basic and acidic residues. The segment at 81–101 (PKEKEDGDNNNKRGGRGPQKA) is disordered. The 51-residue stretch at 102 to 152 (KWCKKCDAPKPPRAHHCRHCARCIPRMDHHCPWTGNCVSLQTFPHFLRFLV) folds into the DHHC domain. Residue Cys132 is the S-palmitoyl cysteine intermediate of the active site. The helical transmembrane segment at 147-166 (FLRFLVYTNAALVYFARLLW) threads the bilayer. Topologically, residues 167–178 (TRLYYGLWDQRH) are lumenal. A helical membrane pass occupies residues 179 to 201 (VPAYLGPSVGALLGCTMLSIAWF). Residues 202-486 (ATQFALMVLL…RKVKSNGVHE (285 aa)) lie on the Cytoplasmic side of the membrane. The tract at residues 314–420 (NDRVGMWPPP…QDGRAWMNSE (107 aa)) is disordered. Basic and acidic residues-rich tracts occupy residues 324 to 333 (DPEKLRRERA) and 346 to 376 (LNTE…DLRR). Residues 386-399 (EEDEIMAELEEDEG) show a composition bias toward acidic residues.

Belongs to the DHHC palmitoyltransferase family. PFA4 subfamily.

The protein resides in the endoplasmic reticulum membrane. The catalysed reaction is L-cysteinyl-[protein] + hexadecanoyl-CoA = S-hexadecanoyl-L-cysteinyl-[protein] + CoA. Mediates the reversible addition of palmitate to target proteins, thereby regulating their membrane association and biological function. This is Palmitoyltransferase pfa4 from Neurospora crassa (strain ATCC 24698 / 74-OR23-1A / CBS 708.71 / DSM 1257 / FGSC 987).